Reading from the N-terminus, the 60-residue chain is Metallothionein A (60 aa).

The interval 1 to 28 (MDPCDCSKSGTCNCGGSCTCTNCSCKSC) is beta. 20 residues coordinate a divalent metal cation: C4, C6, C12, C14, C18, C20, C23, C25, C28, C32, C33, C35, C36, C40, C43, C47, C49, C54, C58, and C59. Residues 29-60 (KKSCCPCCPSGCTKCASGCVCKGKTCDTSCCQ) are alpha.

The protein belongs to the metallothionein superfamily. Type 1 family.

Functionally, metallothioneins have a high content of cysteine residues that bind various heavy metals. In Chionodraco hamatus (Antarctic teleost icefish), this protein is Metallothionein A (mta).